We begin with the raw amino-acid sequence, 361 residues long: DNA-(apurinic or apyrimidinic site) endonuclease (361 aa).

The disordered stretch occupies residues 1–90 (MTSRTKKLKM…TNKTTASVSI (90 aa)). The span at 25–39 (TSEEEKEEVEEEEEE) shows a compositional bias: acidic residues. A Nuclear localization signal motif is present at residues 41–44 (KKRK). The segment covering 43 to 64 (RKLVKKTPAKKAPAKKAAAKKK) has biased composition (basic residues). Residues 68–80 (EDEDEEEKEEEEE) are compositionally biased toward acidic residues. Position 139 (Glu-139) interacts with Mg(2+). The active site involves Tyr-211. Residues Asp-252, Asn-254, and Asp-350 each contribute to the Mg(2+) site. Asp-252 (proton donor/acceptor) is an active-site residue.

Belongs to the DNA repair enzymes AP/ExoA family. It depends on Mg(2+) as a cofactor. Requires Mn(2+) as cofactor.

The protein resides in the nucleus. The chain is DNA-(apurinic or apyrimidinic site) endonuclease (apeA) from Dictyostelium discoideum (Social amoeba).